A 645-amino-acid chain; its full sequence is DNA mismatch repair protein MutL (645 aa).

The tract at residues 371–403 is disordered; sequence VHDQKDKNHDVESHKNNLDSTSSTNNESTEVSN. The segment covering 372-387 has biased composition (basic and acidic residues); it reads HDQKDKNHDVESHKNN. Low complexity predominate over residues 390-402; that stretch reads STSSTNNESTEVS.

The protein belongs to the DNA mismatch repair MutL/HexB family.

In terms of biological role, this protein is involved in the repair of mismatches in DNA. It is required for dam-dependent methyl-directed DNA mismatch repair. May act as a 'molecular matchmaker', a protein that promotes the formation of a stable complex between two or more DNA-binding proteins in an ATP-dependent manner without itself being part of a final effector complex. This chain is DNA mismatch repair protein MutL, found in Staphylococcus epidermidis (strain ATCC 35984 / DSM 28319 / BCRC 17069 / CCUG 31568 / BM 3577 / RP62A).